Here is an 86-residue protein sequence, read N- to C-terminus: Stage V sporulation protein S (86 aa).

Functionally, interferes with sporulation at an early stage. Seems to play a positive role in allowing cells to progress beyond stage V of sporulation. The chain is Stage V sporulation protein S from Bacillus subtilis (strain 168).